The primary structure comprises 88 residues: Small ribosomal subunit protein bS20 (88 aa).

A disordered region spans residues 1-33 (MANTSSAKKATRKIARRTAVNKSRRTQMRGSVR).

This sequence belongs to the bacterial ribosomal protein bS20 family.

Functionally, binds directly to 16S ribosomal RNA. The chain is Small ribosomal subunit protein bS20 from Rhodopseudomonas palustris (strain BisB5).